A 277-amino-acid chain; its full sequence is 2-dehydro-3-deoxyphosphooctonate aldolase (277 aa).

Belongs to the KdsA family.

It is found in the cytoplasm. It catalyses the reaction D-arabinose 5-phosphate + phosphoenolpyruvate + H2O = 3-deoxy-alpha-D-manno-2-octulosonate-8-phosphate + phosphate. It participates in carbohydrate biosynthesis; 3-deoxy-D-manno-octulosonate biosynthesis; 3-deoxy-D-manno-octulosonate from D-ribulose 5-phosphate: step 2/3. It functions in the pathway bacterial outer membrane biogenesis; lipopolysaccharide biosynthesis. The sequence is that of 2-dehydro-3-deoxyphosphooctonate aldolase from Brucella melitensis biotype 2 (strain ATCC 23457).